Reading from the N-terminus, the 144-residue chain is Giant hemoglobin AIII chain (144 aa).

Residues 2-144 (ECGPLQRLKV…DVITGGIQGN (143 aa)) enclose the Globin domain. Residue His95 coordinates heme b.

Belongs to the globin family. In terms of assembly, giant hemoglobin is composed of four heme-containing chains (AI to AIV), and two linker chains (AV and AVI).

In Lamellibrachia sp. (Deep-sea giant tube worm), this protein is Giant hemoglobin AIII chain.